Consider the following 364-residue polypeptide: Paraneoplastic antigen Ma2 homolog (364 aa).

Ala-2 carries the N-acetylalanine modification. The span at 335–353 shows a compositional bias: acidic residues; sequence EEEEASFENESIEEPEEGD. Positions 335-364 are disordered; it reads EEEEASFENESIEEPEEGDGYGGWNHEGDD. Positions 354–364 are enriched in gly residues; sequence GYGGWNHEGDD.

This sequence belongs to the PNMA family.

The protein localises to the nucleus. It localises to the nucleolus. This Macaca fascicularis (Crab-eating macaque) protein is Paraneoplastic antigen Ma2 homolog (PNMA2).